Consider the following 554-residue polypeptide: Protein PNS1 (554 aa).

2 stretches are compositionally biased toward low complexity: residues 1–19 and 27–45; these read MSGP…NNNN and SYQM…QPQY. The disordered stretch occupies residues 1–90; the sequence is MSGPQYGAQP…TDGYGGPPPS (90 aa). Residues 1-105 are Cytoplasmic-facing; that stretch reads MSGPQYGAQP…KVQKPKYNDW (105 aa). Residues 68-90 show a composition bias toward pro residues; it reads PQGPPPNGSKPPPTDGYGGPPPS. Residues 106 to 126 traverse the membrane as a helical segment; sequence WAGLLFLATVAGFVAVSAISI. The Extracellular segment spans residues 127 to 153; that stretch reads HGYADNRSQNNGSLNGQRNTFGLTTHT. N-linked (GlcNAc...) asparagine glycosylation is found at asparagine 132 and asparagine 137. A helical membrane pass occupies residues 154 to 174; that stretch reads IYLFVWVLICAIVLSYAYMWM. The Cytoplasmic portion of the chain corresponds to 175–181; sequence ARKFTKQ. The helical transmembrane segment at 182–202 threads the bilayer; it reads FIYATGILNIVMGLVTALYML. The Extracellular portion of the chain corresponds to 203–206; the sequence is SRKY. A helical transmembrane segment spans residues 207 to 227; sequence WSGGIVFLIFVVLQALFFWSC. At 228-255 the chain is on the cytoplasmic side; the sequence is RSRIPFSTLMLQTAIDVSKVHGHVYLVS. Residues 256–276 traverse the membrane as a helical segment; sequence AVGGVIGTLFAAYWAITLVAV. The Extracellular portion of the chain corresponds to 277-297; that stretch reads YVKFEPDPNNAACRNAGGCSS. Residues 298-318 form a helical membrane-spanning segment; sequence GKVIGLIVFITFAGYWISEWL. The Cytoplasmic portion of the chain corresponds to 319–352; that stretch reads KNTIHTTVAGIYGSWYFNSRNYPTKVTRGALKRS. Residues 353-373 form a helical membrane-spanning segment; it reads LTYSFGSISLGSLFIAIINLI. Topologically, residues 374 to 389 are extracellular; it reads RQLAQAAQQNAAQEGD. A helical membrane pass occupies residues 390-410; the sequence is ILGTILWCIFGCLIGILDWLV. The Cytoplasmic segment spans residues 411 to 451; sequence EFINRYAFCHIALYGKAYFAAAKDTWKMVKDRGIDALINEC. The helical transmembrane segment at 452 to 472 threads the bilayer; it reads LIGPVLTFGATFVAYACGLIA. At 473-487 the chain is on the extracellular side; that stretch reads YLYMVYTKPAYNDGG. A helical membrane pass occupies residues 488 to 508; the sequence is GFTPVVVAFAFLIGLQVCNVF. Residues 509–554 lie on the Cytoplasmic side of the membrane; it reads TTPLTSGIDTIFVAMAWDPEVLMRDHPDLYHRMVQVYPHVQEAIHA.

The protein belongs to the CTL (choline transporter-like) family.

The protein localises to the cell membrane. Functionally, probably involved in transport through the plasma membrane. The chain is Protein PNS1 (pns-1) from Neurospora crassa (strain ATCC 24698 / 74-OR23-1A / CBS 708.71 / DSM 1257 / FGSC 987).